The primary structure comprises 156 residues: Ribosomal RNA large subunit methyltransferase H (156 aa).

Residues Leu-72 and Gly-104 each coordinate S-adenosyl-L-methionine.

It belongs to the RNA methyltransferase RlmH family. As to quaternary structure, homodimer.

Its subcellular location is the cytoplasm. It catalyses the reaction pseudouridine(1915) in 23S rRNA + S-adenosyl-L-methionine = N(3)-methylpseudouridine(1915) in 23S rRNA + S-adenosyl-L-homocysteine + H(+). Its function is as follows. Specifically methylates the pseudouridine at position 1915 (m3Psi1915) in 23S rRNA. The chain is Ribosomal RNA large subunit methyltransferase H from Maricaulis maris (strain MCS10) (Caulobacter maris).